The sequence spans 438 residues: Trigger factor (438 aa).

Residues 163 to 248 (GDTAIIDFAG…VKEIKRKEIA (86 aa)) enclose the PPIase FKBP-type domain.

The protein belongs to the FKBP-type PPIase family. Tig subfamily.

Its subcellular location is the cytoplasm. It catalyses the reaction [protein]-peptidylproline (omega=180) = [protein]-peptidylproline (omega=0). Involved in protein export. Acts as a chaperone by maintaining the newly synthesized protein in an open conformation. Functions as a peptidyl-prolyl cis-trans isomerase. The protein is Trigger factor of Pelotomaculum thermopropionicum (strain DSM 13744 / JCM 10971 / SI).